A 100-amino-acid polypeptide reads, in one-letter code: Urease subunit gamma (100 aa).

It belongs to the urease gamma subunit family. In terms of assembly, heterotrimer of UreA (gamma), UreB (beta) and UreC (alpha) subunits. Three heterotrimers associate to form the active enzyme.

It localises to the cytoplasm. It carries out the reaction urea + 2 H2O + H(+) = hydrogencarbonate + 2 NH4(+). It participates in nitrogen metabolism; urea degradation; CO(2) and NH(3) from urea (urease route): step 1/1. This Synechococcus sp. (strain WH7805) protein is Urease subunit gamma.